The chain runs to 450 residues: FAD-dependent monooxygenase okaB (450 aa).

A helical membrane pass occupies residues 14–34 (IVIIIVGLGIAGLSAAIECHG). Residues E43 and R116 each contribute to the FAD site. Residue R194 is part of the active site. FAD contacts are provided by D318 and G331.

It belongs to the paxM FAD-dependent monooxygenase family.

Its subcellular location is the membrane. The enzyme catalyses cyclo(N(8)-(alpha,alpha-dimethylallyl)-L-Trp-6a-(alpha,alpha-dimethylallyl)-L-Trp) + AH2 + O2 = okaramine C + A + H2O. It participates in alkaloid biosynthesis. Its function is as follows. FAD-dependent monooxygenase; part of the gene cluster that mediates the biosynthesis of okaramine B, a prenylated indole alkaloid that possesses an unusual octacyclic ring system, including a four-membered azetidine ring and an eight-membered azocine ring, and that exhibits insecticidal activity against silkworm larvae. Within the pathway, okaC performs indole 2,3-epoxidation, facilitating the formation of the hexahydropyrrolo[2,3-b]indole (HPI) moiety of okaramine C. okaC then performs asymmetric reverse prenylation of cyclo(L-Trp-L-Trp) at N-1 and C-2' of the indole ring to produce the cyclic prenylated tryptophan dimer cyclo(N8-(alpha,alpha-dimethylallyl)-L-Trp-6a-(alpha,alpha-dime-thylallyl)-L-Trp). The biosynthesis begins with the NRPS okaA that condenses two tryptophan molecules into cyclo(L-Trp-L-Trp). Prenylation by the prenyltransferase okaC then leads to the formation of cyclo(N8-(alpha,alpha-dimethylallyl)-L-Trp-6a-(alpha,alpha-dime-thylallyl)-L-Trp). This is followed by indole 2,3-epoxidation by the FAD-dependent monooxygenase okaB to facilitate the formation of the hexahydropyrrolo[2,3-b]indole (HPI) moiety of okaramine C. The cytochrome P450 monooxygenase okaD then likely catalyzes formation of the eight-membered ring of okaramine A. The dioxygenase okaE further forms the unusual 2-dimethyl-3-methyl-azetidine ring to yield 12-deshydroxyl okaramine E, as well as the hydroxylation of 12-deshydroxyl okaramine E to produce okaramine E. The cytochrome P450 monoxygenase okaG converts 12-deshydroxyl okaramine E into 3-desmethyl okaramine B which is further methylated by the methyltransferase okaF into okaramine B. In a shunt pathway, okaG and okaF together are also able to convert okaramine E into okaramine D. Okaramine H is produced by nonenzymatic conversion from okaramine A. The protein is FAD-dependent monooxygenase okaB of Penicillium ochrochloron.